The chain runs to 1325 residues: Cellulose synthase 1 operon protein C (1325 aa).

Positions 1-30 are cleaved as a signal peptide; the sequence is MNRRYVFSLSAGLLASSCMGAIMPVPVARA. TPR repeat units follow at residues 50–83, 85–117, 292–325, 326–359, 406–439, 558–591, 702–735, and 737–769; these read RQILLQQARFWLQQQQYDNARQALQNAQRIAPDA, DVLEVQGEYQTAMGNREAAADTLRHLQEVAPGS, AGLARQAGFQQLNSGRLSAAEQSFQSALQINSHD, ADSLGGMGLVSMRQGDAAEARRYFQEAMAADPKT, TGATLMLADLQRTTGQIDASEQEYRSVLARDPNN, NDAATRRLLSGLSPEDYSPAIRSIAEEMQIKEDL, MGIAVAQSDLLNQRGDQAQAYDHLAPALRADPEA, and SPKLALARLYNGEGKSSKALDIDLAVLRHNPQD. A disordered region spans residues 838 to 886; sequence VEGSRSASGPAATEEDALAPPSSNPFRHHGYGRQTELGAPVTGGSYSME.

Belongs to the AcsC/BcsC family.

The protein localises to the cell outer membrane. The protein operates within glycan metabolism; bacterial cellulose biosynthesis. Its function is as follows. Required for maximal bacterial cellulose synthesis. It may be involved in the formation of a membrane complex for extrusion of the cellulose product. This is Cellulose synthase 1 operon protein C (bcsCI) from Komagataeibacter xylinus (Gluconacetobacter xylinus).